Consider the following 293-residue polypeptide: Formamidopyrimidine-DNA glycosylase (293 aa).

Pro2 (schiff-base intermediate with DNA) is an active-site residue. Glu3 (proton donor) is an active-site residue. Lys58 functions as the Proton donor; for beta-elimination activity in the catalytic mechanism. The DNA site is built by His104, Arg123, and Lys166. An FPG-type zinc finger spans residues Gln257–Arg293. Arg283 functions as the Proton donor; for delta-elimination activity in the catalytic mechanism.

Belongs to the FPG family. In terms of assembly, monomer. It depends on Zn(2+) as a cofactor.

The catalysed reaction is Hydrolysis of DNA containing ring-opened 7-methylguanine residues, releasing 2,6-diamino-4-hydroxy-5-(N-methyl)formamidopyrimidine.. It catalyses the reaction 2'-deoxyribonucleotide-(2'-deoxyribose 5'-phosphate)-2'-deoxyribonucleotide-DNA = a 3'-end 2'-deoxyribonucleotide-(2,3-dehydro-2,3-deoxyribose 5'-phosphate)-DNA + a 5'-end 5'-phospho-2'-deoxyribonucleoside-DNA + H(+). Involved in base excision repair of DNA damaged by oxidation or by mutagenic agents. Acts as a DNA glycosylase that recognizes and removes damaged bases. Has a preference for oxidized purines, such as 7,8-dihydro-8-oxoguanine (8-oxoG). Has AP (apurinic/apyrimidinic) lyase activity and introduces nicks in the DNA strand. Cleaves the DNA backbone by beta-delta elimination to generate a single-strand break at the site of the removed base with both 3'- and 5'-phosphates. This chain is Formamidopyrimidine-DNA glycosylase, found in Bradyrhizobium sp. (strain BTAi1 / ATCC BAA-1182).